Here is a 910-residue protein sequence, read N- to C-terminus: Leucine--tRNA ligase (910 aa).

Residues 42 to 52 (PYPSGKLHMGH) carry the 'HIGH' region motif. A 'KMSKS' region motif is present at residues 658–662 (TMSKS). Lysine 661 contacts ATP.

It belongs to the class-I aminoacyl-tRNA synthetase family.

It is found in the cytoplasm. The enzyme catalyses tRNA(Leu) + L-leucine + ATP = L-leucyl-tRNA(Leu) + AMP + diphosphate. In Acidovorax sp. (strain JS42), this protein is Leucine--tRNA ligase.